A 454-amino-acid chain; its full sequence is Pup--protein ligase (454 aa).

Glu-9 provides a ligand contact to Mg(2+). Arg-53 serves as a coordination point for ATP. Residue Tyr-55 coordinates Mg(2+). Asp-57 acts as the Proton acceptor in catalysis. Glu-63 provides a ligand contact to Mg(2+). Positions 66 and 421 each coordinate ATP.

Belongs to the Pup ligase/Pup deamidase family. Pup-conjugating enzyme subfamily.

It carries out the reaction ATP + [prokaryotic ubiquitin-like protein]-L-glutamate + [protein]-L-lysine = ADP + phosphate + N(6)-([prokaryotic ubiquitin-like protein]-gamma-L-glutamyl)-[protein]-L-lysine.. The protein operates within protein degradation; proteasomal Pup-dependent pathway. It functions in the pathway protein modification; protein pupylation. Functionally, catalyzes the covalent attachment of the prokaryotic ubiquitin-like protein modifier Pup to the proteasomal substrate proteins, thereby targeting them for proteasomal degradation. This tagging system is termed pupylation. The ligation reaction involves the side-chain carboxylate of the C-terminal glutamate of Pup and the side-chain amino group of a substrate lysine. This Frankia casuarinae (strain DSM 45818 / CECT 9043 / HFP020203 / CcI3) protein is Pup--protein ligase.